Reading from the N-terminus, the 156-residue chain is 6,7-dimethyl-8-ribityllumazine synthase (156 aa).

5-amino-6-(D-ribitylamino)uracil contacts are provided by residues phenylalanine 22, 57 to 59, and 81 to 83; these read AYE and TVI. (2S)-2-hydroxy-3-oxobutyl phosphate is bound at residue 86 to 87; sequence GT. Histidine 89 serves as the catalytic Proton donor. Phenylalanine 114 provides a ligand contact to 5-amino-6-(D-ribitylamino)uracil. Residue arginine 128 coordinates (2S)-2-hydroxy-3-oxobutyl phosphate.

It belongs to the DMRL synthase family. In terms of assembly, forms an icosahedral capsid composed of 60 subunits, arranged as a dodecamer of pentamers.

It carries out the reaction (2S)-2-hydroxy-3-oxobutyl phosphate + 5-amino-6-(D-ribitylamino)uracil = 6,7-dimethyl-8-(1-D-ribityl)lumazine + phosphate + 2 H2O + H(+). It participates in cofactor biosynthesis; riboflavin biosynthesis; riboflavin from 2-hydroxy-3-oxobutyl phosphate and 5-amino-6-(D-ribitylamino)uracil: step 1/2. In terms of biological role, catalyzes the formation of 6,7-dimethyl-8-ribityllumazine by condensation of 5-amino-6-(D-ribitylamino)uracil with 3,4-dihydroxy-2-butanone 4-phosphate. This is the penultimate step in the biosynthesis of riboflavin. This chain is 6,7-dimethyl-8-ribityllumazine synthase, found in Cronobacter sakazakii (strain ATCC BAA-894) (Enterobacter sakazakii).